A 252-amino-acid chain; its full sequence is Type III pantothenate kinase (252 aa).

Residue 6–13 (DIGNTNIV) coordinates ATP. 107-110 (GADL) lines the substrate pocket. The Proton acceptor role is filled by aspartate 109. Aspartate 129 serves as a coordination point for K(+). Position 132 (threonine 132) interacts with ATP. Threonine 184 provides a ligand contact to substrate.

It belongs to the type III pantothenate kinase family. In terms of assembly, homodimer. The cofactor is NH4(+). It depends on K(+) as a cofactor.

It localises to the cytoplasm. It catalyses the reaction (R)-pantothenate + ATP = (R)-4'-phosphopantothenate + ADP + H(+). It participates in cofactor biosynthesis; coenzyme A biosynthesis; CoA from (R)-pantothenate: step 1/5. Catalyzes the phosphorylation of pantothenate (Pan), the first step in CoA biosynthesis. This is Type III pantothenate kinase from Bifidobacterium animalis subsp. lactis (strain AD011).